The sequence spans 513 residues: Protein disulfide-isomerase 2 (513 aa).

Positions 1 to 20 (MNKFLALLFVLALFANIAFS) are cleaved as a signal peptide. Thioredoxin domains follow at residues 21–147 (CEGH…EELK) and 355–486 (DVIG…DNAA). Residues C70, C73, C406, and C409 each act as nucleophile in the active site. 2 cysteine pairs are disulfide-bonded: C70/C73 and C406/C409. Residues 491-513 (LPSSQTDDNVESKKDSSAKHDEL) form a disordered region. Residues 500 to 513 (VESKKDSSAKHDEL) are compositionally biased toward basic and acidic residues. The Prevents secretion from ER signature appears at 510-513 (HDEL).

This sequence belongs to the protein disulfide isomerase family.

The protein localises to the endoplasmic reticulum lumen. The enzyme catalyses Catalyzes the rearrangement of -S-S- bonds in proteins.. Its function is as follows. Participates in the folding of proteins containing disulfide bonds, may be involved in glycosylation, prolyl hydroxylation and triglyceride transfer. This chain is Protein disulfide-isomerase 2 (pdi2), found in Dictyostelium discoideum (Social amoeba).